The primary structure comprises 233 residues: MQNFQPRHFAIVPAAGSGSRMATSRPKQYLPLLGKPLIFHSLAVLCAAPDVDKVFVVLSVEDAEWRRHDWSVLGPKLVPLFCGGGTRADSVLAGLRAVADEIEPSDWVLVHDAARPCLAPWHIEKLARELARDEVGGLLAVPVADTLKRADEHRQVLATVPRENLWQAQTPQMFRHVMLRRALEAATNATDEASAIEAAGLHPRLVESDATNLKVTYPLDLHLAEWILTNRGS.

This sequence belongs to the IspD/TarI cytidylyltransferase family. IspD subfamily.

It catalyses the reaction 2-C-methyl-D-erythritol 4-phosphate + CTP + H(+) = 4-CDP-2-C-methyl-D-erythritol + diphosphate. It participates in isoprenoid biosynthesis; isopentenyl diphosphate biosynthesis via DXP pathway; isopentenyl diphosphate from 1-deoxy-D-xylulose 5-phosphate: step 2/6. In terms of biological role, catalyzes the formation of 4-diphosphocytidyl-2-C-methyl-D-erythritol from CTP and 2-C-methyl-D-erythritol 4-phosphate (MEP). This is 2-C-methyl-D-erythritol 4-phosphate cytidylyltransferase from Aromatoleum aromaticum (strain DSM 19018 / LMG 30748 / EbN1) (Azoarcus sp. (strain EbN1)).